Consider the following 169-residue polypeptide: Allophycocyanin subunit beta-18 (169 aa).

N72 bears the N4-methylasparagine mark. Residue C82 participates in (2R,3E)-phycocyanobilin binding.

It belongs to the phycobiliprotein family. As to quaternary structure, heterodimer of an alpha and a beta chain. In terms of processing, contains one covalently linked bilin chromophore.

The protein localises to the plastid. The protein resides in the chloroplast thylakoid membrane. In terms of biological role, light-harvesting photosynthetic bile pigment-protein from the phycobiliprotein complex. Allophycocyanin has a maximum absorption at approximately 650 nanometers. In Porphyra purpurea (Red seaweed), this protein is Allophycocyanin subunit beta-18 (apcF).